The sequence spans 276 residues: Phospholipid phosphatase 2 (276 aa).

At 1–4 (MERR) the chain is on the cytoplasmic side. The helical transmembrane segment at 5–25 (WVFVLLDVLCVLVASLPFIIL) threads the bilayer. The Lumenal portion of the chain corresponds to 26–51 (TLVNAPYKRGFYCGDDSIRYPYRPDT). The helical transmembrane segment at 52–72 (ITHGLMAGVIITATVVLVSSG) threads the bilayer. Residues 73 to 87 (EAYLVYTDRLYSRSD) lie on the Cytoplasmic side of the membrane. The helical transmembrane segment at 88–108 (FNNYVAAIYKVLGTFLFGAAV) threads the bilayer. Over 109–161 (SQSLTDLAKYMIGRLRPSFLAVCDPDWSRVNCSGYVQVEVCRGSPANVTEARL) the chain is Lumenal. The phosphatase sequence motif I stretch occupies residues 117-125 (KYMIGRLRP). 2 N-linked (GlcNAc...) asparagine glycosylation sites follow: Asn-139 and Asn-155. Residues 162–182 (SFYSGHSSFGMYCMLFLALYV) form a helical membrane-spanning segment. The interval 164-167 (YSGH) is phosphatase sequence motif II. His-167 functions as the Proton donors in the catalytic mechanism. The Cytoplasmic portion of the chain corresponds to 183–189 (QARLCWK). Residues 190 to 210 (WARLLRPTVQFFLVAFAIYVG) traverse the membrane as a helical segment. Residues 211 to 225 (YTRVSDNKHHWSDVL) lie on the Lumenal side of the membrane. Residues 212 to 223 (TRVSDNKHHWSD) form a phosphatase sequence motif III region. His-219 (nucleophile) is an active-site residue. A helical transmembrane segment spans residues 226 to 246 (VGLLQGALVACLTVCYVSDFF). The Cytoplasmic segment spans residues 247-276 (KSRPPQSCQENEESERKPSLSLTLTLGDRP). The interval 252–276 (QSCQENEESERKPSLSLTLTLGDRP) is disordered.

This sequence belongs to the PA-phosphatase related phosphoesterase family. In terms of assembly, forms functional homodimers and homooligomers. Can also form heterooligomers with PLPP1 and PLPP3. In terms of processing, N-glycosylated. In terms of tissue distribution, expressed in the brain.

It localises to the membrane. The protein localises to the cell membrane. Its subcellular location is the early endosome membrane. It is found in the endoplasmic reticulum membrane. The catalysed reaction is a 1,2-diacyl-sn-glycero-3-phosphate + H2O = a 1,2-diacyl-sn-glycerol + phosphate. The enzyme catalyses 1,2-dihexadecanoyl-sn-glycero-3-phosphate + H2O = 1,2-dihexadecanoyl-sn-glycerol + phosphate. It catalyses the reaction 1,2-di-(9Z-octadecenoyl)-sn-glycero-3-phosphate + H2O = 1,2-di-(9Z-octadecenoyl)-sn-glycerol + phosphate. It carries out the reaction a monoacyl-sn-glycero-3-phosphate + H2O = a monoacylglycerol + phosphate. The catalysed reaction is (9Z)-octadecenoyl-sn-glycero-3-phosphate + H2O = (9Z-octadecenoyl)-glycerol + phosphate. The enzyme catalyses sphing-4-enine 1-phosphate + H2O = sphing-4-enine + phosphate. It catalyses the reaction an N-acylsphing-4-enine 1-phosphate + H2O = an N-acylsphing-4-enine + phosphate. It carries out the reaction N-(octanoyl)-sphing-4-enine-1-phosphate + H2O = N-octanoylsphing-4-enine + phosphate. The catalysed reaction is N-(9Z-octadecenoyl)-ethanolamine phosphate + H2O = N-(9Z-octadecenoyl) ethanolamine + phosphate. The protein operates within lipid metabolism; phospholipid metabolism. With respect to regulation, magnesium-independent phospholipid phosphatase. Insensitive to N-ethylmaleimide. Its function is as follows. Magnesium-independent phospholipid phosphatase that catalyzes the dephosphorylation of a variety of glycerolipid and sphingolipid phosphate esters including phosphatidate/PA, lysophosphatidate/LPA, sphingosine 1-phosphate/S1P and ceramide 1-phosphate/C1P. Has no apparent extracellular phosphatase activity and therefore most probably acts intracellularly. Also acts on N-oleoyl ethanolamine phosphate/N-(9Z-octadecenoyl)-ethanolamine phosphate, a potential physiological compound. Through dephosphorylation of these bioactive lipid mediators produces new bioactive compounds and may regulate signal transduction in different cellular processes. Indirectly regulates, for instance, cell cycle G1/S phase transition through its phospholipid phosphatase activity. This chain is Phospholipid phosphatase 2, found in Rattus norvegicus (Rat).